The following is a 2382-amino-acid chain: Highly reducing polyketide synthase srdA (2382 aa).

Residues 1 to 25 (MAPHSTLDSDYSSGSSTPTSASAAG) form a disordered region. The 431-residue stretch at 44–474 (QEPIAIIGMG…GANAHAILEA (431 aa)) folds into the Ketosynthase family 3 (KS3) domain. Catalysis depends on for beta-ketoacyl synthase activity residues cysteine 217, histidine 352, and histidine 390. The tract at residues 580 to 891 (VFTGQGAQWP…HYGSALSRGK (312 aa)) is malonyl-CoA:ACP transacylase (MAT) domain. Serine 672 serves as the catalytic For malonyltransferase activity. Positions 971–1108 (HDLLGSQVHG…GLVKIDSAPA (138 aa)) are N-terminal hotdog fold. The dehydratase (DH) domain stretch occupies residues 971-1274 (HDLLGSQVHG…RQVSYQSGIQ (304 aa)). One can recognise a PKS/mFAS DH domain in the interval 971 to 1275 (HDLLGSQVHG…QVSYQSGIQQ (305 aa)). Histidine 1003 (proton acceptor; for dehydratase activity) is an active-site residue. The interval 1121 to 1275 (MEPQAPRTWY…QVSYQSGIQQ (155 aa)) is C-terminal hotdog fold. The Proton donor; for dehydratase activity role is filled by aspartate 1189. Residues 1668–1979 (GQIDSIFFRR…AKGHSGSVVV (312 aa)) are enoyl reductase (ER) domain. The segment at 2004 to 2180 (SYLLVGCLGG…ATSIGLGMIS (177 aa)) is ketoreductase (KR) domain. The Carrier domain maps to 2298–2376 (SVEDAVLKMI…LLSELITKKM (79 aa)). The residue at position 2335 (serine 2335) is an O-(pantetheine 4'-phosphoryl)serine.

Functionally, highly reducing polyketide synthase; part of the gene cluster that mediates the biosynthesis of sordarial, a salicylic aldehyde structurally related to the phytotoxin pyriculol. The most interesting aspect of this pathway is formation of an aromatic product from the highly reducing polyketide synthase srdA. SrdA synthesizes a reduced polyketide chain from one molecule of acetyl-CoA and five molecules of malonyl-CoA. The polyketide chain is then reductively released as an aldehyde. The oxidoreductases srdC, srdD and srdE then oxidize one of the hydroxy groups to facilitate the intramolecular aldol condensation, followed by dehydration to yield a salicylic aldehyde. This aldehyde can undergo facile reduction by endogenous reductases to yield the alcohol 1-hydroxy-2-hydroxymethyl-3-pent-1,3-dienylbenzene. The flavin-dependent srdI counteract against the propensity of the aldehydes to be reduced under physiological conditions and is responsible for reoxidizing 1-hydroxy-2-hydroxymethyl-3-pent-1,3-dienylbenzene back to the salicylic aldehyde. This salicylic aldehyde is then selectively epoxidized by the cupin-domain-containing oxidoreductase srdB to yield the epoxide, which can be hydrolyzed stereoselectively by the hydrolase srdG to give the final product sordarial. The polypeptide is Highly reducing polyketide synthase srdA (Neurospora crassa (strain ATCC 24698 / 74-OR23-1A / CBS 708.71 / DSM 1257 / FGSC 987)).